The chain runs to 295 residues: Cyclic dipyrimidine nucleotide synthase CdnE (295 aa).

Residues 1-28 (MAKYTEDQLTSWTKPPSDSEQTKLENSE) are disordered. The span at 7-19 (DQLTSWTKPPSDS) shows a compositional bias: polar residues. Positions 51 and 53 each coordinate UTP. Residue aspartate 67 participates in Mg(2+) binding. 5 residues coordinate UTP: lysine 123, asparagine 169, arginine 197, phenylalanine 217, and lysine 276. The Pyrimidine specificity motif (R/Q)xW in donor pocket signature appears at 275–277 (RKW).

This sequence belongs to the CD-NTase family. E02 subfamily. As to quaternary structure, monomer. Mg(2+) is required as a cofactor.

It catalyses the reaction 2 UTP = c-di-UMP + 2 diphosphate. The enzyme catalyses UTP + CTP = cyclic CMP-UMP + 2 diphosphate. Functionally, cyclic nucleotide synthase (second messenger synthase) of a CBASS antivirus system. CBASS (cyclic oligonucleotide-based antiphage signaling system) provides immunity against bacteriophage. The CD-NTase protein synthesizes cyclic nucleotides in response to infection; these serve as specific second messenger signals. The signals activate a diverse range of effectors, leading to bacterial cell death and thus abortive phage infection. A type I-B(UU) CBASS system. This Cecembia lonarensis (strain CCUG 58316 / KCTC 22772 / LW9) protein is Cyclic dipyrimidine nucleotide synthase CdnE.